The chain runs to 292 residues: Xyloglucan endotransglucosylase/hydrolase protein 2 (292 aa).

Positions 1–24 (MNRIRYCFELVSVLFLMFTANARA) are cleaved as a signal peptide. The region spanning 25–219 (RGRGAIDFDV…WAYAPFKAQY (195 aa)) is the GH16 domain. The Nucleophile role is filled by Glu-106. Glu-110 functions as the Proton donor in the catalytic mechanism. Xyloglucan contacts are provided by residues Glu-110, 123 to 125 (QTN), 133 to 135 (GRE), 198 to 199 (NW), and Gly-203. Disulfide bonds link Cys-227-Cys-239 and Cys-275-Cys-288. Arg-280 is a binding site for xyloglucan.

The protein belongs to the glycosyl hydrolase 16 family. XTH group 1 subfamily. In terms of processing, contains at least one intrachain disulfide bond essential for its enzymatic activity.

It localises to the secreted. It is found in the cell wall. The protein localises to the extracellular space. Its subcellular location is the apoplast. It carries out the reaction breaks a beta-(1-&gt;4) bond in the backbone of a xyloglucan and transfers the xyloglucanyl segment on to O-4 of the non-reducing terminal glucose residue of an acceptor, which can be a xyloglucan or an oligosaccharide of xyloglucan.. Functionally, may catalyze xyloglucan endohydrolysis (XEH) and/or endotransglycosylation (XET). Cleaves and religates xyloglucan polymers, an essential constituent of the primary cell wall, and thereby participates in cell wall construction of growing tissues. The polypeptide is Xyloglucan endotransglucosylase/hydrolase protein 2 (XTH2) (Arabidopsis thaliana (Mouse-ear cress)).